The primary structure comprises 422 residues: Probable alpha-1,6-mannosyltransferase MNN11 (422 aa).

Residues 1–31 (MAIKPRTKGKTYSSRSVGSQWFNRLGFKQNK) are Cytoplasmic-facing. The chain crosses the membrane as a helical; Signal-anchor for type II membrane protein span at residues 32–52 (YGTCKFLSIITAFVFILYFFS). The Lumenal portion of the chain corresponds to 53-422 (NRFYPISRSA…GHMYQKIKKS (370 aa)).

Belongs to the glycosyltransferase 34 family. As to quaternary structure, component of the M-Pol II complex composed of ANP1, MNN9, MNN10, MNN11 and HOC1.

Its subcellular location is the golgi apparatus. It localises to the cis-Golgi network membrane. Functionally, required for synthesis of full-length mannan chains. The M-Pol II complex possesses alpha-1,6-mannosyltransferase activity and is probably involved in the elongation of the mannan backbone of N-linked glycans on cell wall and periplasmic proteins. In Saccharomyces cerevisiae (strain ATCC 204508 / S288c) (Baker's yeast), this protein is Probable alpha-1,6-mannosyltransferase MNN11 (MNN11).